The following is a 201-amino-acid chain: Small ribosomal subunit protein uS4c (201 aa).

Residues 89 to 149 (MRLDNILFRL…DKPKSGALIK (61 aa)) enclose the S4 RNA-binding domain.

The protein belongs to the universal ribosomal protein uS4 family. As to quaternary structure, part of the 30S ribosomal subunit. Contacts protein S5. The interaction surface between S4 and S5 is involved in control of translational fidelity.

The protein resides in the plastid. In terms of biological role, one of the primary rRNA binding proteins, it binds directly to 16S rRNA where it nucleates assembly of the body of the 30S subunit. Functionally, with S5 and S12 plays an important role in translational accuracy. The sequence is that of Small ribosomal subunit protein uS4c (rps4) from Cuscuta exaltata (Tall dodder).